Here is a 156-residue protein sequence, read N- to C-terminus: E3 ubiquitin-protein ligase RNF181 (156 aa).

An RING-type; atypical zinc finger spans residues 79–120; it reads CPVCLLEFEEGETVRQLPCEHLFHSACILPWLGKTNSCPLCR.

Belongs to the RNF181 family.

The enzyme catalyses S-ubiquitinyl-[E2 ubiquitin-conjugating enzyme]-L-cysteine + [acceptor protein]-L-lysine = [E2 ubiquitin-conjugating enzyme]-L-cysteine + N(6)-ubiquitinyl-[acceptor protein]-L-lysine.. It participates in protein modification; protein ubiquitination. E3 ubiquitin-protein ligase which accepts ubiquitin from an E2 ubiquitin-conjugating enzyme in the form of a thioester and then directly transfers the ubiquitin to targeted substrates. Catalyzes monoubiquitination of 26S proteasome subunit PSMC2/RPT1. The protein is E3 ubiquitin-protein ligase RNF181 (rnf181) of Xenopus laevis (African clawed frog).